The sequence spans 117 residues: Large ribosomal subunit protein uL18 (117 aa).

Over residues methionine 1 to arginine 17 the composition is skewed to basic residues. The tract at residues methionine 1 to serine 23 is disordered.

It belongs to the universal ribosomal protein uL18 family. Part of the 50S ribosomal subunit; part of the 5S rRNA/L5/L18/L25 subcomplex. Contacts the 5S and 23S rRNAs.

This is one of the proteins that bind and probably mediate the attachment of the 5S RNA into the large ribosomal subunit, where it forms part of the central protuberance. The protein is Large ribosomal subunit protein uL18 of Mycoplasmopsis synoviae (strain 53) (Mycoplasma synoviae).